Reading from the N-terminus, the 145-residue chain is Peptide methionine sulfoxide reductase MsrB (145 aa).

The region spanning 4-127 is the MsrB domain; it reads SEELKQRIGD…NSAALKFIPY (124 aa). Cys116 acts as the Nucleophile in catalysis.

It belongs to the MsrB Met sulfoxide reductase family.

The catalysed reaction is L-methionyl-[protein] + [thioredoxin]-disulfide + H2O = L-methionyl-(R)-S-oxide-[protein] + [thioredoxin]-dithiol. The chain is Peptide methionine sulfoxide reductase MsrB from Streptococcus pyogenes serotype M6 (strain ATCC BAA-946 / MGAS10394).